Reading from the N-terminus, the 3411-residue chain is Genome polyprotein (3411 aa).

Residues 1–104 lie on the Cytoplasmic side of the membrane; sequence MSGRKAQGKT…LSSRKRRSHD (104 aa). The segment at 38–72 is hydrophobic; homodimerization of capsid protein C; the sequence is PGPSRGVQGFIFFFLFNILTGKKITAHLKRLWKML. A propeptide spans 102-121 (ER anchor for the capsid protein C, removed in mature form by serine protease NS3); the sequence is SHDVLTVQFLILGMLLMTGG. The helical transmembrane segment at 105-125 threads the bilayer; sequence VLTVQFLILGMLLMTGGVTLV. Topologically, residues 126–244 are extracellular; the sequence is RKNRWLLLNV…GERQLQKIER (119 aa). 2 N-linked (GlcNAc...) asparagine; by host glycosylation sites follow: Asn-134 and Asn-150. Residues 245–265 traverse the membrane as a helical segment; that stretch reads WLVRNPFFAVTALTIAYLVGS. Residues 266–270 lie on the Cytoplasmic side of the membrane; it reads NMTQR. A helical membrane pass occupies residues 271-285; the sequence is VVIALLVLAVGPAYS. Residues 286 to 730 are Extracellular-facing; sequence AHCIGITDRD…TVFGSAFQGL (445 aa). 8 disulfides stabilise this stretch: Cys-288-Cys-315, Cys-345-Cys-401, Cys-345-Cys-406, Cys-359-Cys-390, Cys-377-Cys-401, Cys-377-Cys-406, Cys-467-Cys-568, and Cys-585-Cys-615. The interval 383–396 is fusion peptide; sequence DRGWGNGCGLFGKG. The helical transmembrane segment at 731–751 threads the bilayer; sequence FGGLNWITKVIMGAVLIWVGI. The Extracellular portion of the chain corresponds to 752–757; that stretch reads NTRNMT. Residues 758 to 778 traverse the membrane as a helical segment; the sequence is MSMSMILVGVIMMFLSLGVGA. Residues 779–1132 are Extracellular-facing; it reads DQGCAINFGK…LVRSWVTAGE (354 aa). Intrachain disulfides connect Cys-782-Cys-793, Cys-833-Cys-921, Cys-957-Cys-1002, Cys-1058-Cys-1107, Cys-1069-Cys-1091, and Cys-1090-Cys-1094. N-linked (GlcNAc...) asparagine; by host glycans are attached at residues Asn-908 and Asn-986. A helical transmembrane segment spans residues 1133–1153; sequence IHAVPFGLVSMMIAMEVVLRK. The Cytoplasmic segment spans residues 1154 to 1201; sequence RQGPKQMLVGGVVLLGAMLVGQVTLLDLLKLTVAVGLHFHEMNNGGDA. Residues 1202 to 1222 form a helical membrane-spanning segment; sequence MYMALIAAFSIRPGLLIGFGL. The Lumenal segment spans residues 1223–1287; the sequence is RTLWSPRERL…ILPLMALLTP (65 aa). The helical transmembrane segment at 1288–1308 threads the bilayer; that stretch reads VTMAEVRLATMLFCTVVIIGV. The Cytoplasmic segment spans residues 1309–1355; the sequence is LHQNSKDTSMQKTIPLVALTLTSYLGLTQPFLGLCAFLATRIFGRRS. A helical membrane pass occupies residues 1356–1376; the sequence is IPVNEALAAAGLVGVLAGLAF. Over 1377-1378 the chain is Lumenal; that stretch reads QE. A helical membrane pass occupies residues 1379-1399; the sequence is MENFLGPIAVGGILMMLVSVA. At 1400–1456 the chain is on the cytoplasmic side; it reads GRVDGLELKKLGEVSWEEEAEISGSSARYDVALSEQGEFKLLSEEKVPWDQVVMTSL. The tract at residues 1407–1446 is interacts with and activates NS3 protease; sequence LKKLGEVSWEEEAEISGSSARYDVALSEQGEFKLLSEEKV. Positions 1457–1477 form an intramembrane region, helical; that stretch reads ALVGAAIHPFALLLVLAGWLF. Residues 1478–2157 are Cytoplasmic-facing; it reads HVRGARRSGD…RNALSMMPEA (680 aa). One can recognise a Peptidase S7 domain in the interval 1485 to 1665; it reads SGDVLWDIPT…EVKEEGKEEL (181 aa). Residues His-1537, Asp-1561, and Ser-1622 each act as charge relay system; for serine protease NS3 activity in the active site. The Helicase ATP-binding domain occupies 1669 to 1825; it reads PTMLKKGMTT…HSNGEIEDVQ (157 aa). Positions 1673–1676 are important for RNA-binding; sequence KKGM. Residue 1682–1689 coordinates ATP; sequence FHPGAGKT. A DEAH box motif is present at residues 1773–1776; it reads DEAH. The Helicase C-terminal domain occupies 1820–1997; it reads EIEDVQTDIP…VRGGMVAPLY (178 aa). Lys-1877 bears the N6-acetyllysine; by host mark. Residues 1942–1961 are disordered; the sequence is AAQRRGRIGRNPNRDGDSYY. Residues 2158 to 2178 form a helical membrane-spanning segment; the sequence is MTIVMLFILAGLLTSGMVIFF. The Lumenal portion of the chain corresponds to 2179-2186; it reads MSPKGISR. The segment at residues 2187–2207 is an intramembrane region (helical); sequence MSMAMGTMAGCGYLMFLGGVK. Topologically, residues 2208-2209 are lumenal; sequence PT. A helical transmembrane segment spans residues 2210-2230; that stretch reads HISYIMLIFFVLMVVVIPEPG. Residues 2231–2241 lie on the Cytoplasmic side of the membrane; sequence QQRSIQDNQVA. A helical membrane pass occupies residues 2242–2262; it reads YLIIGILTLVSVVAANELGML. Residues 2263 to 2293 lie on the Lumenal side of the membrane; the sequence is EKTKEDLFGKKNLIPSSASPWSWPDLDLKPG. The segment at residues 2294-2314 is an intramembrane region (helical); the sequence is AAWTVYVGIVTMLSPMLHHWI. The Lumenal segment spans residues 2315-2360; it reads KVEYGNLSLSGIAQSASVLSFMDKGIPFMKMNISVIILLVSGWNSI. The chain crosses the membrane as a helical span at residues 2361–2380; that stretch reads TVMPLLCGIGCAMLHWSLIL. Over 2381–2421 the chain is Cytoplasmic; the sequence is PGIKAQQSKLAQRRVFHGVAKNPVVDGNPTVDIEEAPEMPA. A helical membrane pass occupies residues 2422–2442; it reads LYEKKLALYLLLALSLASVAM. Over 2443–2445 the chain is Lumenal; that stretch reads CRT. Residues 2446–2466 form a helical membrane-spanning segment; it reads PFSLAEGIVLASAALGPLIEG. The Cytoplasmic segment spans residues 2467-3411; the sequence is NTSLLWNGPM…DADLQPGELI (945 aa). The mRNA cap 0-1 NS5-type MT domain maps to 2507 to 2771; that stretch reads GSANGKTLGE…DVILPIGTRS (265 aa). S-adenosyl-L-methionine is bound at residue Ser-2562. Ser-2562 carries the phosphoserine modification. The active-site For 2'-O-MTase activity is the Lys-2567. S-adenosyl-L-methionine is bound by residues Gly-2592, Trp-2593, Thr-2610, Leu-2611, Asp-2637, and Ile-2638. The active-site For 2'-O-MTase activity is the Asp-2652. Ile-2653 is a binding site for S-adenosyl-L-methionine. Residues Lys-2688 and Glu-2724 each act as for 2'-O-MTase activity in the active site. Position 2726 (Tyr-2726) interacts with S-adenosyl-L-methionine. The short motif at 2878 to 2911 is the Nuclear localization signal element; that stretch reads RKIMKVVNRWLFRHLAREKNPRLCTKEEFIAKVR. Residues Glu-2945, His-2949, Cys-2954, and Cys-2957 each coordinate Zn(2+). In terms of domain architecture, RdRp catalytic spans 3035 to 3187; it reads GGFYADDTAG…RPIDDRFGLA (153 aa). His-3222, Cys-3238, and Cys-3357 together coordinate Zn(2+).

This sequence in the N-terminal section; belongs to the class I-like SAM-binding methyltransferase superfamily. mRNA cap 0-1 NS5-type methyltransferase family. In terms of assembly, homodimer. Interacts (via N-terminus) with host EXOC1 (via C-terminus); this interaction results in EXOC1 degradation through the proteasome degradation pathway. Forms heterodimers with envelope protein E in the endoplasmic reticulum and Golgi. As to quaternary structure, homodimer; in the endoplasmic reticulum and Golgi. Interacts with protein prM. Interacts with non-structural protein 1. In terms of assembly, homodimer; Homohexamer when secreted. Interacts with envelope protein E. NS1 interacts with NS4B. Interacts with host complement protein CFH; this interaction leads to the degradation of C3. Interacts (via N-terminus) with serine protease NS3. As to quaternary structure, forms a heterodimer with serine protease NS3. May form homooligomers. In terms of assembly, forms a heterodimer with NS2B. Interacts with non-structural protein 2A (via N-terminus). Interacts with NS4B. Interacts with unphosphorylated RNA-directed RNA polymerase NS5; this interaction stimulates RNA-directed RNA polymerase NS5 guanylyltransferase activity. NS3 interacts with host PDCD6IP; this interaction contributes to virion release. Interacts with serine protease NS3. As to quaternary structure, homodimer. Interacts with host STAT2; this interaction prevents the establishment of cellular antiviral state. Interacts with serine protease NS3. Interacts with host TRIM23; this interaction leads to NS5 ubiquitination. Post-translationally, specific enzymatic cleavages in vivo yield mature proteins. The nascent capsid protein C contains a C-terminal hydrophobic domain that act as a signal sequence for translocation of prM into the lumen of the ER. Mature capsid protein C is cleaved at a site upstream of this hydrophobic domain by NS3. prM is cleaved in post-Golgi vesicles by a host furin, releasing the mature small envelope protein M, and peptide pr. Non-structural protein 2A-alpha, a C-terminally truncated form of non-structural protein 2A, results from partial cleavage by NS3. Specific enzymatic cleavages in vivo yield mature proteins peptide 2K acts as a signal sequence and is removed from the N-terminus of NS4B by the host signal peptidase in the ER lumen. Signal cleavage at the 2K-4B site requires a prior NS3 protease-mediated cleavage at the 4A-2K site. In terms of processing, cleaved in post-Golgi vesicles by a host furin, releasing the mature small envelope protein M, and peptide pr. This cleavage is incomplete as up to 30% of viral particles still carry uncleaved prM. N-glycosylated. Post-translationally, N-glycosylated. The excreted form is glycosylated and this is required for efficient secretion of the protein from infected cells. In terms of processing, polyubiquitinated; ubiquitination is probably mediated by host TRIM23 and is prerequisite for NS5-STAT2 interaction. NS5 is not ISGylated or sumoylated. Acetylated by host KAT5. Acetylation modulates NS3 RNA-binding and unwinding activities and plays an important positive role for viral replication. Post-translationally, phosphorylated on serines residues. This phosphorylation may trigger NS5 nuclear localization.

It is found in the virion. The protein resides in the host nucleus. The protein localises to the host cytoplasm. It localises to the host perinuclear region. Its subcellular location is the secreted. It is found in the virion membrane. The protein resides in the host endoplasmic reticulum membrane. The enzyme catalyses Selective hydrolysis of -Xaa-Xaa-|-Yaa- bonds in which each of the Xaa can be either Arg or Lys and Yaa can be either Ser or Ala.. It catalyses the reaction RNA(n) + a ribonucleoside 5'-triphosphate = RNA(n+1) + diphosphate. It carries out the reaction a ribonucleoside 5'-triphosphate + H2O = a ribonucleoside 5'-diphosphate + phosphate + H(+). The catalysed reaction is ATP + H2O = ADP + phosphate + H(+). The enzyme catalyses a 5'-end (5'-triphosphoguanosine)-ribonucleoside in mRNA + S-adenosyl-L-methionine = a 5'-end (N(7)-methyl 5'-triphosphoguanosine)-ribonucleoside in mRNA + S-adenosyl-L-homocysteine. It catalyses the reaction a 5'-end (N(7)-methyl 5'-triphosphoguanosine)-ribonucleoside in mRNA + S-adenosyl-L-methionine = a 5'-end (N(7)-methyl 5'-triphosphoguanosine)-(2'-O-methyl-ribonucleoside) in mRNA + S-adenosyl-L-homocysteine + H(+). Its function is as follows. Plays a role in virus budding by binding to the cell membrane and gathering the viral RNA into a nucleocapsid that forms the core of a mature virus particle. During virus entry, may induce genome penetration into the host cytoplasm after hemifusion induced by the surface proteins. Can migrate to the cell nucleus where it modulates host functions. Functionally, inhibits RNA silencing by interfering with host Dicer. In terms of biological role, prevents premature fusion activity of envelope proteins in trans-Golgi by binding to envelope protein E at pH6.0. After virion release in extracellular space, gets dissociated from E dimers. Acts as a chaperone for envelope protein E during intracellular virion assembly by masking and inactivating envelope protein E fusion peptide. prM is the only viral peptide matured by host furin in the trans-Golgi network probably to avoid catastrophic activation of the viral fusion activity in acidic Golgi compartment prior to virion release. prM-E cleavage is inefficient, and many virions are only partially matured. These uncleaved prM would play a role in immune evasion. Its function is as follows. May play a role in virus budding. Exerts cytotoxic effects by activating a mitochondrial apoptotic pathway through M ectodomain. May display a viroporin activity. Functionally, binds to host cell surface receptor and mediates fusion between viral and cellular membranes. Envelope protein is synthesized in the endoplasmic reticulum in the form of heterodimer with protein prM. They play a role in virion budding in the ER, and the newly formed immature particle is covered with 60 spikes composed of heterodimer between precursor prM and envelope protein E. The virion is transported to the Golgi apparatus where the low pH causes dissociation of PrM-E heterodimers and formation of E homodimers. prM-E cleavage is inefficient, and many virions are only partially matured. These uncleaved prM would play a role in immune evasion. In terms of biological role, involved in immune evasion, pathogenesis and viral replication. Once cleaved off the polyprotein, is targeted to three destinations: the viral replication cycle, the plasma membrane and the extracellular compartment. Essential for viral replication. Required for formation of the replication complex and recruitment of other non-structural proteins to the ER-derived membrane structures. Excreted as a hexameric lipoparticle that plays a role against host immune response. Antagonizing the complement function. Binds to the host macrophages and dendritic cells. Inhibits signal transduction originating from Toll-like receptor 3 (TLR3). Component of the viral RNA replication complex that functions in virion assembly and antagonizes the host immune response. Its function is as follows. Required cofactor for the serine protease function of NS3. May have membrane-destabilizing activity and form viroporins. Functionally, displays three enzymatic activities: serine protease, NTPase and RNA helicase. NS3 serine protease, in association with NS2B, performs its autocleavage and cleaves the polyprotein at dibasic sites in the cytoplasm: C-prM, NS2A-NS2B, NS2B-NS3, NS3-NS4A, NS4A-2K and NS4B-NS5. NS3 RNA helicase binds RNA and unwinds dsRNA in the 3' to 5' direction. Also plays a role in virus assembly. In terms of biological role, regulates the ATPase activity of the NS3 helicase activity. NS4A allows NS3 helicase to conserve energy during unwinding. Functions as a signal peptide for NS4B and is required for the interferon antagonism activity of the latter. Its function is as follows. Induces the formation of ER-derived membrane vesicles where the viral replication takes place. Inhibits interferon (IFN)-induced host STAT1 phosphorylation and nuclear translocation, thereby preventing the establishment of cellular antiviral state by blocking the IFN-alpha/beta pathway. Functionally, replicates the viral (+) and (-) RNA genome, and performs the capping of genomes in the cytoplasm. NS5 methylates viral RNA cap at guanine N-7 and ribose 2'-O positions. Besides its role in RNA genome replication, also prevents the establishment of cellular antiviral state by blocking the interferon-alpha/beta (IFN-alpha/beta) signaling pathway. IFN-I induces binding of NS5 to host IFN-activated transcription factor STAT2, preventing its transcriptional activity. Host TRIM23 is the E3 ligase that interacts with and polyubiquitinates NS5 to promote its binding to STAT2 and trigger IFN-I signaling inhibition. The sequence is that of Genome polyprotein from Yellow fever virus (strain Ghana/Asibi/1927) (YFV).